Reading from the N-terminus, the 143-residue chain is Putative pre-16S rRNA nuclease (143 aa).

The protein belongs to the YqgF nuclease family.

It localises to the cytoplasm. Its function is as follows. Could be a nuclease involved in processing of the 5'-end of pre-16S rRNA. The polypeptide is Putative pre-16S rRNA nuclease (Lactobacillus johnsonii (strain CNCM I-12250 / La1 / NCC 533)).